A 554-amino-acid polypeptide reads, in one-letter code: Phosphoglucomutase (554 aa).

Alpha-D-glucose 1,6-bisphosphate is bound at residue R21. Phosphothreonine is present on T111. Position 113 (S113) interacts with alpha-D-glucose 1,6-bisphosphate. S113 acts as the Phosphoserine intermediate in catalysis. Residues S113, D278, D280, and D282 each coordinate Mg(2+). S113 carries the phosphoserine modification. Alpha-D-glucose 1,6-bisphosphate contacts are provided by D282, R283, T346, E365, S367, and K378.

This sequence belongs to the phosphohexose mutase family. As to quaternary structure, monomer. Mg(2+) is required as a cofactor.

It localises to the cytoplasm. The protein localises to the nucleus. It carries out the reaction alpha-D-glucose 1-phosphate = alpha-D-glucose 6-phosphate. It catalyses the reaction O-phospho-L-seryl-[protein] + alpha-D-glucose 1-phosphate = alpha-D-glucose 1,6-bisphosphate + L-seryl-[protein]. The enzyme catalyses alpha-D-glucose 1,6-bisphosphate + L-seryl-[protein] = O-phospho-L-seryl-[protein] + alpha-D-glucose 6-phosphate. Its function is as follows. Catalyzes the reversible isomerization of alpha-D-glucose 1-phosphate to alpha-D-glucose 6-phosphate. The mechanism proceeds via the intermediate compound alpha-D-glucose 1,6-bisphosphate. Key enzyme in hexose metabolism. The reverse reaction is an essential step for biosynthesis because glucose 1-phosphate is the starting point for the synthesis of UDP-glucose, which acts as a precursor for the synthesis of oligosaccharides and trehalose. In Schizosaccharomyces pombe (strain 972 / ATCC 24843) (Fission yeast), this protein is Phosphoglucomutase.